A 1025-amino-acid chain; its full sequence is Interferon-induced helicase C domain-containing protein 1 (1025 aa).

2 consecutive CARD domains span residues 7–97 and 110–190; these read AEDS…YVKP and AHDE…QTGN. Glycyl lysine isopeptide (Lys-Gly) (interchain with G-Cter in ISG15) cross-links involve residues Lys23 and Lys43. The disordered stretch occupies residues 273–297; that stretch reads SLGHNSNMGRDSGTMGSDSDESVIQ. The span at 275 to 297 shows a compositional bias: polar residues; it reads GHNSNMGRDSGTMGSDSDESVIQ. Phosphoserine occurs at positions 289, 291, and 302. The 194-residue stretch at 317 to 510 folds into the Helicase ATP-binding domain; sequence AQPALDGKNI…SEAEKHILNI (194 aa). Phosphoserine is present on residues Ser645 and Ser648. Residues 700–872 form the Helicase C-terminal domain; sequence KLIKLRNTIL…NMKPEEYAHK (173 aa). A Phosphoserine; by RIOK3 modification is found at Ser828. The region spanning 893-1020 is the RLR CTR domain; that stretch reads AKQYNDNPSL…PDLDYSEYCL (128 aa). Residues Cys907, Cys910, Cys962, and Cys964 each contribute to the Zn(2+) site.

It belongs to the helicase family. RLR subfamily. As to quaternary structure, monomer in the absence of ligands and homodimerizes in the presence of dsRNA ligands. Can assemble into helical or linear polymeric filaments on long dsRNA. Interacts with MAVS/IPS1. Interacts (via the CARD domains) with TKFC, the interaction is inhibited by viral infection. Interacts with PCBP2. Interacts with NLRC5. Interacts with PIAS2-beta. Interacts with DDX60. Interacts with ANKRD17. Interacts with IKBKE. Interacts with ATG5 and ATG12, either as ATG5 and ATG12 monomers or as ATG12-ATG5 conjugates. Interacts with ZCCHC3; leading to activate IFIH1/MDA5. Interacts with RNF123. Interacts with DDX3X. Interacts with NOD1; this interaction promotes transcription of antiviral genes and inhibition of viral replication. Interacts with ECSIT; this interaction bridges IFIH1 to the MAVS complex at the mitochondrion. In terms of processing, during apoptosis, processed into 3 cleavage products. The helicase-containing fragment, once liberated from the CARD domains, translocate from the cytoplasm to the nucleus. The processed protein significantly sensitizes cells to DNA degradation. Post-translationally, sumoylated. Sumoylation positively regulates its role in type I interferon induction and is enhanced by PIAS2-beta. Ubiquitinated by RNF125, leading to its degradation by the proteasome. USP17/UPS17L2-dependent deubiquitination positively regulates the receptor. Ubiquitinated by TRIM25 via 'Lys-63'-linked ubiquitination, promoting activation of IFIH1/MDA5. Ubiquitinated by TRIM40 via 'Lys-48'-linked ubiquitination; leading to proteasomal degradation. Ubiquitinated by TRIM65 via 'Lys-63'-linked ubiquitination, promoting activation of IFIH1/MDA5. In terms of processing, ISGylated by ISG15. ISGylation increases upon infection with viruses. ISGylation at Lys-23 and Lys-43 is dependent of dephosphorylation, regulates mitochondrial translocation and oligomerization. Essential for IFIH1/MDA5-mediated cytokine responses and restriction of virus replication. Post-translationally, phosphorylated. Dephosphorylated by phsophatases PP1; dephosphorylation precedes and is required for ISGylation. Expression is prominent in lung, liver, kidney, heart and spleen (at protein level). Widely expressed at low level.

It localises to the cytoplasm. It is found in the nucleus. The protein localises to the mitochondrion. It catalyses the reaction ATP + H2O = ADP + phosphate + H(+). In terms of biological role, innate immune receptor which acts as a cytoplasmic sensor of viral nucleic acids and plays a major role in sensing viral infection and in the activation of a cascade of antiviral responses including the induction of type I interferons and pro-inflammatory cytokines. Its ligands include mRNA lacking 2'-O-methylation at their 5' cap and long-dsRNA (&gt;1 kb in length). Upon ligand binding it associates with mitochondria antiviral signaling protein (MAVS/IPS1) which activates the IKK-related kinases: TBK1 and IKBKE which phosphorylate interferon regulatory factors: IRF3 and IRF7 which in turn activate transcription of antiviral immunological genes, including interferons (IFNs); IFN-alpha and IFN-beta. Responsible for detecting the Picornaviridae family members such as encephalomyocarditis virus (EMCV), mengo encephalomyocarditis virus (ENMG), and theiler's murine encephalomyelitis virus (TMEV). Can also detect other viruses such as dengue virus (DENV), west Nile virus (WNV), and reovirus. Also involved in antiviral signaling in response to viruses containing a dsDNA genome, such as vaccinia virus. Plays an important role in amplifying innate immune signaling through recognition of RNA metabolites that are produced during virus infection by ribonuclease L (RNase L). May play an important role in enhancing natural killer cell function and may be involved in growth inhibition and apoptosis in several tumor cell lines. The chain is Interferon-induced helicase C domain-containing protein 1 from Mus musculus (Mouse).